The sequence spans 448 residues: Glutamyl-tRNA reductase (448 aa).

Residues 49 to 52 (TCNR), S109, 114 to 116 (ETQ), and Q120 each bind substrate. C50 acts as the Nucleophile in catalysis. 189–194 (GAGEMS) contacts NADP(+).

This sequence belongs to the glutamyl-tRNA reductase family. As to quaternary structure, homodimer.

It catalyses the reaction (S)-4-amino-5-oxopentanoate + tRNA(Glu) + NADP(+) = L-glutamyl-tRNA(Glu) + NADPH + H(+). It functions in the pathway porphyrin-containing compound metabolism; protoporphyrin-IX biosynthesis; 5-aminolevulinate from L-glutamyl-tRNA(Glu): step 1/2. Its function is as follows. Catalyzes the NADPH-dependent reduction of glutamyl-tRNA(Glu) to glutamate 1-semialdehyde (GSA). The polypeptide is Glutamyl-tRNA reductase (Staphylococcus haemolyticus (strain JCSC1435)).